The chain runs to 665 residues: Adenylate cyclase 1 (665 aa).

The segment at 1–25 (MLQRSESGFKDIESMQDSNADKPSR) is disordered. Positions 7–24 (SGFKDIESMQDSNADKPS) are enriched in basic and acidic residues. Helical transmembrane passes span 33 to 53 (SLLG…LVGL) and 373 to 393 (AVSG…AHLI). In terms of domain architecture, HAMP spans 394–444 (TKSLNQLTDSANRLQDLDFATPIDVSSHVAEISTLNGAMNRARDAIFTFAL). In terms of domain architecture, Guanylate cyclase spans 471–603 (TAMFTDIYDF…DTVNVASRLE (133 aa)). Positions 476 and 520 each coordinate Mg(2+).

Belongs to the adenylyl cyclase class-3 family. Mg(2+) serves as cofactor.

It localises to the cell membrane. It carries out the reaction ATP = 3',5'-cyclic AMP + diphosphate. Its function is as follows. Plays essential roles in regulation of cellular metabolism by catalyzing the synthesis of a second messenger, cAMP. This is Adenylate cyclase 1 (cya1) from Rhizobium meliloti (strain 1021) (Ensifer meliloti).